The chain runs to 267 residues: uncharacterized protein (267 aa).

The stretch at 37 to 62 (DSSNNYKKKYKKYKRKYIDLKKQLNY) forms a coiled coil.

This is an uncharacterized protein from Acanthamoeba polyphaga (Amoeba).